The primary structure comprises 160 residues: FMRFamide-like neuropeptides 13 (160 aa).

Positions 1 to 17 (MMTSLLTISMFVVAIQA) are cleaved as a signal peptide. Positions 18–43 (FDSSEIRMLDEQYDTKNPFFQFLENS) are excised as a propeptide. Residues phenylalanine 60, phenylalanine 73, phenylalanine 85, phenylalanine 98, phenylalanine 110, phenylalanine 123, phenylalanine 135, phenylalanine 146, and phenylalanine 157 each carry the phenylalanine amide modification.

The protein belongs to the FARP (FMRFamide related peptide) family. Expressed in the ASE sensory neurons, the DD motor neurons, the 15, M3 and M5 cholinergic pharyngeal motoneurons, and the ASG, ASK and BAG neurons.

It is found in the secreted. Its function is as follows. Probable FMRFamide-like neuropeptides. Binds to neuronal receptors such as dmsr-1 to promote sleep in response to cellular stress also known as stress-induced sleep (SIS). Plays a role in behaviors associated with SIS, acting in concert with the FMRFamide related peptide, flp-24 and neuropeptide-like protein nlp-8. In terms of biological role, AADGAPLIRF-amide: Inhibits muscle tension in somatic muscle. Acts as a ligand for the npr-22 receptor in vitro. Acts as a ligand for isoform a of the dmsr-1 G-protein coupled receptor in vitro. APEASPFIRF-amide: Inhibits muscle tension in somatic muscle. Potent inhibitor of the activity of the dissected pharyngeal myogenic muscle system. Acts as a ligand for isoform a of the dmsr-1 G-protein coupled receptor in vitro. Functionally, acts as a ligand for the npr-22 receptor in vitro. Acts as a ligand for isoform a of the dmsr-1 G-protein coupled receptor in vitro. Its function is as follows. Acts as a ligand for isoform a of the dmsr-1 G-protein coupled receptor in vitro. The sequence is that of FMRFamide-like neuropeptides 13 from Caenorhabditis elegans.